A 103-amino-acid chain; its full sequence is Histone H4 (103 aa).

The span at 1 to 14 (MSGRGKGGKGLGKG) shows a compositional bias: gly residues. The segment at 1–20 (MSGRGKGGKGLGKGGAKRHR) is disordered. Position 2 is an N-acetylserine (Ser-2). 2 positions are modified to N6-acetyl-N6-methyllysine; alternate: Lys-6 and Lys-13. Residues 17 to 21 (KRHRK) mediate DNA binding. An N6-methyllysine modification is found at Lys-21.

It belongs to the histone H4 family. In terms of assembly, the nucleosome is a histone octamer containing two molecules each of H2A, H2B, H3 and H4 assembled in one H3-H4 heterotetramer and two H2A-H2B heterodimers. The octamer wraps approximately 147 bp of DNA.

It is found in the nucleus. The protein resides in the chromosome. Functionally, core component of nucleosome. Nucleosomes wrap and compact DNA into chromatin, limiting DNA accessibility to the cellular machineries which require DNA as a template. Histones thereby play a central role in transcription regulation, DNA repair, DNA replication and chromosomal stability. DNA accessibility is regulated via a complex set of post-translational modifications of histones, also called histone code, and nucleosome remodeling. The polypeptide is Histone H4 (Solaster stimpsoni (Striped sun sea star)).